The following is an 84-amino-acid chain: Limulin (84 aa).

In terms of domain architecture, Pentraxin (PTX) spans 6–84 (ITSKVKFPPS…DEQGDFLFNV (79 aa)). Asp67 and Asn68 together coordinate Ca(2+).

This sequence belongs to the pentraxin family. As to quaternary structure, homopentamer. Pentraxin (or pentaxin) have a discoid arrangement of 5 non-covalently bound subunits. Requires Ca(2+) as cofactor. In terms of processing, a disulfide bond links Cys-38 to a Cys in the C-terminal half of the chain of 163 residues.

In terms of biological role, lectin that binds sialic acid. Displays antiviral activity and therefore may contribute to defense against infections. This Limulus polyphemus (Atlantic horseshoe crab) protein is Limulin.